Consider the following 1390-residue polypeptide: DNA-directed RNA polymerase subunit beta (1390 aa).

This sequence belongs to the RNA polymerase beta chain family. The RNAP catalytic core consists of 2 alpha, 1 beta, 1 beta' and 1 omega subunit. When a sigma factor is associated with the core the holoenzyme is formed, which can initiate transcription.

The enzyme catalyses RNA(n) + a ribonucleoside 5'-triphosphate = RNA(n+1) + diphosphate. DNA-dependent RNA polymerase catalyzes the transcription of DNA into RNA using the four ribonucleoside triphosphates as substrates. This Methylobacillus flagellatus (strain ATCC 51484 / DSM 6875 / VKM B-1610 / KT) protein is DNA-directed RNA polymerase subunit beta.